We begin with the raw amino-acid sequence, 186 residues long: Periplasmic nitrate reductase, electron transfer subunit (186 aa).

The first 20 residues, 1-20 (MKTSKLNFLTLVASTGLALA), serve as a signal peptide directing secretion. 8 residues coordinate heme c: His-87, Cys-102, Cys-105, His-106, His-123, Cys-144, Cys-147, and His-148.

This sequence belongs to the NapB family. Component of the periplasmic nitrate reductase NapAB complex composed of NapA and NapB. Post-translationally, binds 2 heme C groups per subunit.

The protein resides in the periplasm. Functionally, electron transfer subunit of the periplasmic nitrate reductase complex NapAB. Transfers electrons to NapA subunit, thus allowing electron flow between membrane and periplasm. Essential for periplasmic nitrate reduction with nitrate as the terminal electron acceptor. This chain is Periplasmic nitrate reductase, electron transfer subunit, found in Wolinella succinogenes (strain ATCC 29543 / DSM 1740 / CCUG 13145 / JCM 31913 / LMG 7466 / NCTC 11488 / FDC 602W) (Vibrio succinogenes).